The chain runs to 84 residues: MGGLQPWHWLIVIAVFVLLFGAKKLPDAARSLGKSMRIFKSEIKEMQSDSNAAKSDQPEQITSERVVVDPSTQSTSSNSDKRPA.

A helical transmembrane segment spans residues 1–21; sequence MGGLQPWHWLIVIAVFVLLFG. The interval 46–84 is disordered; it reads MQSDSNAAKSDQPEQITSERVVVDPSTQSTSSNSDKRPA. A compositionally biased stretch (polar residues) spans 48 to 63; that stretch reads SDSNAAKSDQPEQITS.

The protein belongs to the TatA/E family. In terms of assembly, the Tat system comprises two distinct complexes: a TatABC complex, containing multiple copies of TatA, TatB and TatC subunits, and a separate TatA complex, containing only TatA subunits. Substrates initially bind to the TatABC complex, which probably triggers association of the separate TatA complex to form the active translocon.

Its subcellular location is the cell membrane. In terms of biological role, part of the twin-arginine translocation (Tat) system that transports large folded proteins containing a characteristic twin-arginine motif in their signal peptide across membranes. TatA could form the protein-conducting channel of the Tat system. The chain is Sec-independent protein translocase protein TatA from Mycolicibacterium gilvum (strain PYR-GCK) (Mycobacterium gilvum (strain PYR-GCK)).